We begin with the raw amino-acid sequence, 405 residues long: Glucose-1-phosphate adenylyltransferase (405 aa).

Alpha-D-glucose 1-phosphate contacts are provided by residues Y99, G164, 179-180 (EK), and S197.

The protein belongs to the bacterial/plant glucose-1-phosphate adenylyltransferase family. As to quaternary structure, homotetramer.

The enzyme catalyses alpha-D-glucose 1-phosphate + ATP + H(+) = ADP-alpha-D-glucose + diphosphate. Its pathway is glycan biosynthesis; glycogen biosynthesis. In terms of biological role, involved in the biosynthesis of ADP-glucose, a building block required for the elongation reactions to produce glycogen. Catalyzes the reaction between ATP and alpha-D-glucose 1-phosphate (G1P) to produce pyrophosphate and ADP-Glc. The polypeptide is Glucose-1-phosphate adenylyltransferase (Corynebacterium aurimucosum (strain ATCC 700975 / DSM 44827 / CIP 107346 / CN-1) (Corynebacterium nigricans)).